The following is a 100-amino-acid chain: Cell division protein DrpB (100 aa).

Over 1–16 (MEYGSTKMEERLSRSP) the chain is Cytoplasmic. The helical transmembrane segment at 17 to 37 (GGKLALWAFYTWCGYFVWAMA) threads the bilayer. The Periplasmic portion of the chain corresponds to 38-64 (RYIWVMSRIPDAPVSGFESDLGSTAGK). The helical transmembrane segment at 65-85 (WLGALVGFLFMALVGALLGSI) threads the bilayer. Over 86–100 (AWYTRPRPARSRRYE) the chain is Cytoplasmic.

This sequence belongs to the DrpB family. As to quaternary structure, bacterial adenylate cyclase hybrid (BACTH) studies show interaction of this protein with DamX, FtsI, FtsN, FtsQ, YmgF, DedD, FtsA and MalF, as well as weaker interactions with DedD, MalG and PBP2, but this assay often generates false positive results.

The protein resides in the cell inner membrane. A non-essential division protein that localizes to the septal ring in low ionic strength medium. Its function is as follows. Localizes to the septal ring in about 30% of observed cells before cell constriction occurs; localization occurs in low ionic strength medium (0 NaCl) and requires FtsZ but not FtsEX. Overexpression partially restores correct FtsI localization to the division septum in an ftsEX deletion. Isolated as a multicopy suppressor of an ftsEX deletion mutant; it does not suppress other cell division defects (e.g. ftsA, ftsI, ftsQ or ftsZ). The protein is Cell division protein DrpB of Escherichia coli (strain K12).